Reading from the N-terminus, the 99-residue chain is Aspartyl/glutamyl-tRNA(Asn/Gln) amidotransferase subunit C (99 aa).

This sequence belongs to the GatC family. In terms of assembly, heterotrimer of A, B and C subunits.

The catalysed reaction is L-glutamyl-tRNA(Gln) + L-glutamine + ATP + H2O = L-glutaminyl-tRNA(Gln) + L-glutamate + ADP + phosphate + H(+). It catalyses the reaction L-aspartyl-tRNA(Asn) + L-glutamine + ATP + H2O = L-asparaginyl-tRNA(Asn) + L-glutamate + ADP + phosphate + 2 H(+). Functionally, allows the formation of correctly charged Asn-tRNA(Asn) or Gln-tRNA(Gln) through the transamidation of misacylated Asp-tRNA(Asn) or Glu-tRNA(Gln) in organisms which lack either or both of asparaginyl-tRNA or glutaminyl-tRNA synthetases. The reaction takes place in the presence of glutamine and ATP through an activated phospho-Asp-tRNA(Asn) or phospho-Glu-tRNA(Gln). This Macrococcus caseolyticus (strain JCSC5402) (Macrococcoides caseolyticum) protein is Aspartyl/glutamyl-tRNA(Asn/Gln) amidotransferase subunit C.